Consider the following 360-residue polypeptide: DNA replication and repair protein RecF (360 aa).

Position 30 to 37 (30 to 37 (GQNGSGKT)) interacts with ATP.

Belongs to the RecF family.

Its subcellular location is the cytoplasm. Functionally, the RecF protein is involved in DNA metabolism; it is required for DNA replication and normal SOS inducibility. RecF binds preferentially to single-stranded, linear DNA. It also seems to bind ATP. This Shewanella sp. (strain W3-18-1) protein is DNA replication and repair protein RecF.